The sequence spans 342 residues: Keratin-associated protein 29-1 (342 aa).

Repeat copies occupy residues 5 to 9 (CCPEN), 91 to 95 (CCASD), 239 to 243 (CCVPP), 309 to 313 (CCVTG), and 324 to 328 (CCPPT). The tract at residues 5-328 (CCPENPTAVP…SSGPGCCPPT (324 aa)) is 5 X 5 AA repeats of C-C-X(3).

It belongs to the KRTAP type 10 family.

The polypeptide is Keratin-associated protein 29-1 (Krtap29-1) (Mus musculus (Mouse)).